We begin with the raw amino-acid sequence, 345 residues long: Anthranilate phosphoribosyltransferase (345 aa).

Residues Gly79, 82-83 (GD), Thr87, 89-92 (NVST), 106-114 (KHGNRAVSG), and Ser118 each bind 5-phospho-alpha-D-ribose 1-diphosphate. Residue Gly79 participates in anthranilate binding. Residue Ser91 coordinates Mg(2+). Asn109 contacts anthranilate. Anthranilate is bound at residue Arg164. Mg(2+) is bound by residues Asp223 and Glu224.

The protein belongs to the anthranilate phosphoribosyltransferase family. Homodimer. The cofactor is Mg(2+).

The enzyme catalyses N-(5-phospho-beta-D-ribosyl)anthranilate + diphosphate = 5-phospho-alpha-D-ribose 1-diphosphate + anthranilate. The protein operates within amino-acid biosynthesis; L-tryptophan biosynthesis; L-tryptophan from chorismate: step 2/5. Functionally, catalyzes the transfer of the phosphoribosyl group of 5-phosphorylribose-1-pyrophosphate (PRPP) to anthranilate to yield N-(5'-phosphoribosyl)-anthranilate (PRA). In Saccharolobus islandicus (strain L.S.2.15 / Lassen #1) (Sulfolobus islandicus), this protein is Anthranilate phosphoribosyltransferase.